The primary structure comprises 556 residues: Glutamine--tRNA ligase (556 aa).

Residues 34-44 carry the 'HIGH' region motif; sequence PEPNGYLHIGH. ATP contacts are provided by residues 35–37 and 41–47; these read EPN and HIGHAKS. Asp67 and Tyr212 together coordinate L-glutamine. ATP-binding positions include Thr231, 261–262, and 269–271; these read RL and MSK. Positions 268–272 match the 'KMSKS' region motif; sequence VMSKR.

This sequence belongs to the class-I aminoacyl-tRNA synthetase family. As to quaternary structure, monomer.

It localises to the cytoplasm. The catalysed reaction is tRNA(Gln) + L-glutamine + ATP = L-glutaminyl-tRNA(Gln) + AMP + diphosphate. The chain is Glutamine--tRNA ligase from Vibrio vulnificus (strain YJ016).